Consider the following 449-residue polypeptide: Adenylosuccinate lyase (449 aa).

N(6)-(1,2-dicarboxyethyl)-AMP-binding positions include 9-10, 75-77, and 102-103; these read RY, KHD, and TS. The active-site Proton donor/acceptor is histidine 150. Glutamine 224 contributes to the N(6)-(1,2-dicarboxyethyl)-AMP binding site. Serine 275 serves as the catalytic Proton donor/acceptor. Residues serine 276, 281–283, and 320–324 each bind N(6)-(1,2-dicarboxyethyl)-AMP; these read KMN and SSERI.

This sequence belongs to the lyase 1 family. Adenylosuccinate lyase subfamily. In terms of assembly, homotetramer. Residues from neighboring subunits contribute catalytic and substrate-binding residues to each active site.

The catalysed reaction is N(6)-(1,2-dicarboxyethyl)-AMP = fumarate + AMP. It catalyses the reaction (2S)-2-[5-amino-1-(5-phospho-beta-D-ribosyl)imidazole-4-carboxamido]succinate = 5-amino-1-(5-phospho-beta-D-ribosyl)imidazole-4-carboxamide + fumarate. Its pathway is purine metabolism; AMP biosynthesis via de novo pathway; AMP from IMP: step 2/2. It participates in purine metabolism; IMP biosynthesis via de novo pathway; 5-amino-1-(5-phospho-D-ribosyl)imidazole-4-carboxamide from 5-amino-1-(5-phospho-D-ribosyl)imidazole-4-carboxylate: step 2/2. Its function is as follows. Catalyzes two reactions in de novo purine nucleotide biosynthesis. Catalyzes the breakdown of 5-aminoimidazole- (N-succinylocarboxamide) ribotide (SAICAR or 2-[5-amino-1-(5-phospho-beta-D-ribosyl)imidazole-4-carboxamido]succinate) to 5-aminoimidazole-4-carboxamide ribotide (AICAR or 5-amino-1-(5-phospho-beta-D-ribosyl)imidazole-4-carboxamide) and fumarate, and of adenylosuccinate (ADS or N(6)-(1,2-dicarboxyethyl)-AMP) to adenosine monophosphate (AMP) and fumarate. The polypeptide is Adenylosuccinate lyase (purB) (Methanothermobacter thermautotrophicus (strain ATCC 29096 / DSM 1053 / JCM 10044 / NBRC 100330 / Delta H) (Methanobacterium thermoautotrophicum)).